The primary structure comprises 411 residues: Putative ion-transport protein YfeO (411 aa).

11 helical membrane passes run 9 to 29, 54 to 74, 99 to 119, 149 to 169, 186 to 206, 223 to 243, 258 to 278, 296 to 316, 322 to 342, 343 to 363, and 386 to 406; these read MLLL…VLIA, DSPF…GLII, ALPG…SLGP, ILAS…AALI, LFAP…FFHP, IASG…AVWC, VLIL…GGPL, LGAG…VIAA, GGRI…LHAH, VEAV…VLVV, and LLCI…LLAA.

It belongs to the chloride channel (TC 2.A.49) family.

The protein localises to the cell membrane. In Salmonella paratyphi A (strain ATCC 9150 / SARB42), this protein is Putative ion-transport protein YfeO.